Consider the following 419-residue polypeptide: MDSPCQPQALNQALPQLPGSVSESLESSRARMGVESYLPCPLLPAYHRPGASGEASAGNGTPRTTATATTTTASPLREGFGGQDGGELWPLQSEGAAALVTKECQRLAAQGARPEAPKRKWAKDGGDAPSPSKRPWARQENQEAKGESGMGCDSGASNSSSSSSNTTSSSGEASARLREEVQPSAPERLALDYIVPCMRYYGICVKDNFLGAVLGGRVLAEVEALKWGGRLRDGQLVSQRAIPPRSIRGDQIAWVEGHEPGCRSIGALMAHVDAVIRHCAGRLGNYVINGRTKAMVACYPGNGLGYVRHVDNPHGDGRCITCIYYLNQNWDVKVHGGLLQIFPEGRPVVANIEPLFDRLLIFWSDRRNPHEVKPAYATRYAITVWYFDAKERAAARDKYQLASGQKGVQVPVSQPTTPT.

Low complexity-rich tracts occupy residues 1–18 and 64–73; these read MDSP…PQLP and TTATATTTTA. Disordered regions lie at residues 1-89 and 108-181; these read MDSP…GELW and AAQG…REEV. The Bipartite nuclear localization signal signature appears at 89 to 134; the sequence is WPLQSEGAAALVTKECQRLAAQGARPEAPKRKWAKDGGDAPSPSKR. The segment covering 115-126 has biased composition (basic and acidic residues); it reads EAPKRKWAKDGG. A Phosphoserine modification is found at Ser-130. The segment covering 154–174 has biased composition (low complexity); sequence SGASNSSSSSSNTTSSSGEAS. Residues 237-247 form a beta(2)beta(3) 'finger-like' loop region; that stretch reads VSQRAIPPRSI. Residues 290–388 enclose the Fe2OG dioxygenase domain; it reads GRTKAMVACY…RYAITVWYFD (99 aa). The Fe cation site is built by His-309, Asp-311, and His-370. A 2-oxoglutarate-binding site is contributed by Arg-379.

As to quaternary structure, interacts with E3 ligase SIAH2. Interacts with LIMD1, WTIP and AJUBA. The cofactor is Fe(2+). L-ascorbate is required as a cofactor. In terms of processing, ubiquitinated by SIAH1 and/or SIAH2 in response to the unfolded protein response (UPR), leading to its degradation. As to expression, highly expressed in testis, expression was also detected in the heart brain, liver kidney and lung. Expression was lowest in spleen and skeletal muscle. Constitutively expressed during differentiation of C2C12 skeletal myocytes.

It localises to the nucleus. It carries out the reaction L-prolyl-[protein] + 2-oxoglutarate + O2 = trans-4-hydroxy-L-prolyl-[protein] + succinate + CO2. The catalysed reaction is L-prolyl-[hypoxia-inducible factor alpha subunit] + 2-oxoglutarate + O2 = trans-4-hydroxy-L-prolyl-[hypoxia-inducible factor alpha subunit] + succinate + CO2. Its function is as follows. Prolyl hydroxylase that mediates hydroxylation of proline residues in target proteins, such as ATF4, IKBKB, CEP192 and HIF1A. Target proteins are preferentially recognized via a LXXLAP motif. Cellular oxygen sensor that catalyzes, under normoxic conditions, the post-translational formation of 4-hydroxyproline in hypoxia-inducible factor (HIF) alpha proteins. Hydroxylates a specific proline found in each of the oxygen-dependent degradation (ODD) domains (N-terminal, NODD, and C-terminal, CODD) of HIF1A. Also hydroxylates HIF2A. Has a preference for the CODD site for both HIF1A and HIF2A. Hydroxylated HIFs are then targeted for proteasomal degradation via the von Hippel-Lindau ubiquitination complex. Under hypoxic conditions, the hydroxylation reaction is attenuated allowing HIFs to escape degradation resulting in their translocation to the nucleus, heterodimerization with HIF1B, and increased expression of hypoxy-inducible genes. EGLN2 is involved in regulating hypoxia tolerance and apoptosis in cardiac and skeletal muscle. Also regulates susceptibility to normoxic oxidative neuronal death. Links oxygen sensing to cell cycle and primary cilia formation by hydroxylating the critical centrosome component CEP192 which promotes its ubiquitination and subsequent proteasomal degradation. Hydroxylates IKBKB, mediating NF-kappa-B activation in hypoxic conditions. Also mediates hydroxylation of ATF4, leading to decreased protein stability of ATF4. The protein is Prolyl hydroxylase EGLN2 of Mus musculus (Mouse).